The following is a 430-amino-acid chain: Levansucrase Lscgamma (430 aa).

Sucrose is bound by residues tryptophan 60, aspartate 61, alanine 147, arginine 217, and aspartate 218. Residue aspartate 61 is the Nucleophile of the active site. Catalysis depends on glutamate 302, which acts as the Proton donor/acceptor.

This sequence belongs to the glycosyl hydrolase 68 family. As to quaternary structure, homodimer.

It carries out the reaction [6)-beta-D-fructofuranosyl-(2-&gt;](n) alpha-D-glucopyranoside + sucrose = [6)-beta-D-fructofuranosyl-(2-&gt;](n+1) alpha-D-glucopyranoside + D-glucose. Sucrose hydrolase activity is negatively affected by salt concentration. The levan polymerization rate increases sharply in relation to sucrose concentration reaching the maximum at 100 mM sucrose, and then steadily decreases, suggesting a strong inhibition of the activity by the substrate. In terms of biological role, catalyzes the synthesis of levan, a fructose polymer, by transferring the fructosyl moiety from sucrose to a growing acceptor molecule. Also displays sucrose hydrolase activity. Can depolymerize the levan produced once substrate is completely exhausted. The sequence is that of Levansucrase Lscgamma from Pseudomonas syringae pv. actinidiae.